We begin with the raw amino-acid sequence, 199 residues long: Recombination protein RecR (199 aa).

A C4-type zinc finger spans residues 57-72 (CSICGNITEDDPCDIC). The Toprim domain maps to 80–176 (KAVLVVEDSK…KVTRLAHGLS (97 aa)).

This sequence belongs to the RecR family.

May play a role in DNA repair. It seems to be involved in an RecBC-independent recombinational process of DNA repair. It may act with RecF and RecO. The polypeptide is Recombination protein RecR (Pediococcus pentosaceus (strain ATCC 25745 / CCUG 21536 / LMG 10740 / 183-1w)).